Reading from the N-terminus, the 457-residue chain is Adenylyltransferase and sulfurtransferase MOCS3 (457 aa).

The tract at residues 40–60 (ANGGGNGDGLADEGGERNTGT) is disordered. Thr63 carries the post-translational modification Phosphothreonine. Residues Gly102, Asp123, 130–134 (SNFHR), Lys147, and 191–192 (DN) contribute to the ATP site. Zn(2+) is bound by residues Cys233 and Cys236. Residue Cys250 is the Glycyl thioester intermediate; for adenylyltransferase activity of the active site. Residues Cys309 and Cys312 each coordinate Zn(2+). In terms of domain architecture, Rhodanese spans 358–455 (ESQPHLLFDV…WTRKVDPDFP (98 aa)). Cys414 (cysteine persulfide intermediate; for sulfurtransferase activity) is an active-site residue.

It in the N-terminal section; belongs to the HesA/MoeB/ThiF family. UBA4 subfamily. It depends on Zn(2+) as a cofactor.

It localises to the cytoplasm. The protein resides in the cytosol. The catalysed reaction is [molybdopterin-synthase sulfur-carrier protein]-C-terminal Gly-Gly + ATP + H(+) = [molybdopterin-synthase sulfur-carrier protein]-C-terminal Gly-Gly-AMP + diphosphate. It carries out the reaction [molybdopterin-synthase sulfur-carrier protein]-C-terminal Gly-Gly-AMP + S-sulfanyl-L-cysteinyl-[cysteine desulfurase] + AH2 = [molybdopterin-synthase sulfur-carrier protein]-C-terminal-Gly-aminoethanethioate + L-cysteinyl-[cysteine desulfurase] + A + AMP + 2 H(+). The protein operates within tRNA modification; 5-methoxycarbonylmethyl-2-thiouridine-tRNA biosynthesis. Its pathway is cofactor biosynthesis; molybdopterin biosynthesis. Functionally, plays a central role in 2-thiolation of mcm(5)S(2)U at tRNA wobble positions of cytosolic tRNA(Lys), tRNA(Glu) and tRNA(Gln). Also essential during biosynthesis of the molybdenum cofactor. Acts by mediating the C-terminal thiocarboxylation of sulfur carriers URM1 and MOCS2A. Its N-terminus first activates URM1 and MOCS2A as acyl-adenylates (-COAMP), then the persulfide sulfur on the catalytic cysteine is transferred to URM1 and MOCS2A to form thiocarboxylation (-COSH) of their C-terminus. The reaction probably involves hydrogen sulfide that is generated from the persulfide intermediate and that acts as a nucleophile towards URM1 and MOCS2A. Subsequently, a transient disulfide bond is formed. Does not use thiosulfate as sulfur donor; NFS1 probably acting as a sulfur donor for thiocarboxylation reactions. This chain is Adenylyltransferase and sulfurtransferase MOCS3, found in Drosophila willistoni (Fruit fly).